Reading from the N-terminus, the 441-residue chain is Probable D-serine dehydratase (441 aa).

The residue at position 101 (K101) is an N6-(pyridoxal phosphate)lysine.

The protein belongs to the serine/threonine dehydratase family. DsdA subfamily. It depends on pyridoxal 5'-phosphate as a cofactor.

It catalyses the reaction D-serine = pyruvate + NH4(+). This is Probable D-serine dehydratase from Geobacillus kaustophilus (strain HTA426).